The primary structure comprises 498 residues: Diacylglycerol O-acyltransferase 1 (498 aa).

The tract at residues 1–66 (MGDRGGAGSS…AHTRDKDGRT (66 aa)) is disordered. At 1 to 92 (MGDRGGAGSS…SLFSSDSGFS (92 aa)) the chain is on the cytoplasmic side. An involved in homomerization region spans residues 1–100 (MGDRGGAGSS…FSNYRGILNW (100 aa)). The residue at position 20 (serine 20) is a Phosphoserine. A helical transmembrane segment spans residues 93-127 (NYRGILNWCVVMLILSNARLFLENLIKYGILVDPI). Topologically, residues 128-139 (QVVSLFLKDPYS) are lumenal. The interval 128-139 (QVVSLFLKDPYS) is extracellular loop 1 (EL1). Residues 140-165 (WPAPCVIIASNIFVVAAFQIEKRLAV) traverse the membrane as a helical segment. Residues 140–498 (WPAPCVIIAS…VLNYDAPVGV (359 aa)) are MBOAT fold. Topologically, residues 166 to 170 (GALTE) are cytoplasmic. A helical membrane pass occupies residues 171 to 193 (QMGLLLHVVNLATIICFPAAVAL). Topologically, residues 194–200 (LVESITP) are lumenal. Residues 201–232 (VGSVFALASYSIMFLKLYSYRDVNLWCRQRRV) traverse the membrane as a helical segment. Residues 233-284 (KAKAVSTGKKVSGAAAQQAVSYPDNLTYRDLYYFIFAPTLCYELNFPRSPRI) lie on the Cytoplasmic side of the membrane. Residues 235-287 (KAVSTGKKVSGAAAQQAVSYPDNLTYRDLYYFIFAPTLCYELNFPRSPRIRKR) are intracellular loop 1 (IL1). Residues 285-319 (RKRFLLRRVLEMLFFTQLQVGLIQQWMVPTIQNSM) traverse the membrane as a helical segment. The Lumenal segment spans residues 320 to 326 (KPFKDMD). The chain crosses the membrane as a helical span at residues 327-364 (YSRIIERLLKLAVPNHLIWLIFFYWFFHSCLNAVAELL). Residues 365-410 (QFGDREFYRDWWNAESVTYFWQNWNIPVHKWCIRHFYKPMLRHGSS) are Cytoplasmic-facing. Positions 365–410 (QFGDREFYRDWWNAESVTYFWQNWNIPVHKWCIRHFYKPMLRHGSS) are intracellular loop 2 (IL2). The short motif at 371–377 (FYRDWWN) is the FYXDWWN motif element. An acyl-CoA contacts are provided by residues 385 to 393 (WQNWNIPVH), tyrosine 401, and arginine 415. The segment at 391–405 (PVHKWCIRHFYKPML) is amphipathic helix (AH). Residues 411 to 431 (KWVARTGVFLTSAFFHEYLVS) form a helical membrane-spanning segment. Histidine 426 is a catalytic residue. Over 432-439 (VPLRMFRL) the chain is Lumenal. Residues 440–458 (WAFTAMMAQVPLAWIVGRF) form a helical membrane-spanning segment. The Cytoplasmic segment spans residues 459 to 460 (FQ). Residues 461-492 (GNYGNAAVWVTLIIGQPVAVLMYVHDYYVLNY) traverse the membrane as a helical segment. Position 488 (tyrosine 488) interacts with an acyl-CoA. Residues 493 to 498 (DAPVGV) lie on the Lumenal side of the membrane.

It belongs to the membrane-bound acyltransferase family. Sterol o-acyltransferase subfamily. Homodimer or homotetramer; both forms have similar enzymatic activities.

The protein localises to the endoplasmic reticulum membrane. It carries out the reaction an acyl-CoA + a 1,2-diacyl-sn-glycerol = a triacyl-sn-glycerol + CoA. The catalysed reaction is all-trans-retinol + an acyl-CoA = an all-trans-retinyl ester + CoA. The enzyme catalyses 1-octadecanoyl-2-(5Z,8Z,11Z,14Z-eicosatetraenoyl)-sn-glycerol + (9Z)-octadecenoyl-CoA = 1-octadecanoyl-2-(5Z,8Z,11Z,14Z)-eicosatetraenoyl-3-(9Z)-octadecenoyl-sn-glycerol + CoA. It catalyses the reaction hexadecane-1,2-diol + 2 hexadecanoyl-CoA = 1,2-O,O-dihexadecanoyl-1,2-hexadecanediol + 2 CoA. It carries out the reaction hexadecane-1,2-diol + hexadecanoyl-CoA = 2-hydroxyhexadecyl hexadecanoate + CoA. The catalysed reaction is 2-(9Z-octadecenoyl)-glycerol + hexadecanoyl-CoA = 1-hexadecanoyl-2-(9Z-octadecenoyl)-sn-glycerol + CoA. The enzyme catalyses 1,2-di-(9Z-octadecenoyl)-sn-glycerol + hexadecanoyl-CoA = 1,2-di-(9Z)-octadecenoyl-3-hexadecanoyl-sn-glycerol + CoA. It catalyses the reaction hexadecan-1-ol + hexadecanoyl-CoA = hexadecanyl hexadecanoate + CoA. It carries out the reaction all-trans-retinol + hexadecanoyl-CoA = all-trans-retinyl hexadecanoate + CoA. The catalysed reaction is 13-cis-retinol + hexadecanoyl-CoA = 13-cis-retinyl hexadecanoate + CoA. The enzyme catalyses 1,2-di-(9Z-octadecenoyl)-sn-glycerol + (9Z)-octadecenoyl-CoA = 1,2,3-tri-(9Z-octadecenoyl)-glycerol + CoA. It catalyses the reaction 1,3-di-(9Z-octadecenoyl)-glycerol + (9Z)-octadecenoyl-CoA = 1,2,3-tri-(9Z-octadecenoyl)-glycerol + CoA. It carries out the reaction 2,3-di-(9Z)-octadecenoyl-sn-glycerol + (9Z)-octadecenoyl-CoA = 1,2,3-tri-(9Z-octadecenoyl)-glycerol + CoA. The catalysed reaction is 1-O-(9Z-octadecenyl)-glycerol + (9Z)-octadecenoyl-CoA = 1-O-(9Z-octadecyl)-3-(9Z-octadecenoyl)-glycerol + CoA. The enzyme catalyses 1-(9Z-octadecenoyl)-glycerol + (9Z)-octadecenoyl-CoA = 1,2-di-(9Z-octadecenoyl)-glycerol + CoA. It catalyses the reaction 2-(9Z-octadecenoyl)-glycerol + (9Z)-octadecenoyl-CoA = 1,2-di-(9Z-octadecenoyl)-sn-glycerol + CoA. It carries out the reaction 1-O-(9Z-octadecyl)-3-(9Z-octadecenoyl)-glycerol + (9Z)-octadecenoyl-CoA = 1-O-(9Z-octadecenyl)-2,3-di-(9Z-octadecenoyl)glycerol + CoA. The catalysed reaction is 1,2-di-(9Z-octadecenoyl)-glycerol + (9Z)-octadecenoate + H(+) = 1,2,3-tri-(9Z-octadecenoyl)-glycerol + H2O. The protein operates within lipid metabolism; glycerolipid metabolism. Its function is as follows. Catalyzes the terminal and only committed step in triacylglycerol synthesis by using diacylglycerol and fatty acyl CoA as substrates. Highly expressed in epithelial cells of the small intestine and its activity is essential for the absorption of dietary fats. In liver, plays a role in esterifying exogenous fatty acids to glycerol, and is required to synthesize fat for storage. Also present in female mammary glands, where it produces fat in the milk. May be involved in VLDL (very low density lipoprotein) assembly. In contrast to DGAT2 it is not essential for survival. Functions as the major acyl-CoA retinol acyltransferase (ARAT) in the skin, where it acts to maintain retinoid homeostasis and prevent retinoid toxicity leading to skin and hair disorders. Exhibits additional acyltransferase activities, includin acyl CoA:monoacylglycerol acyltransferase (MGAT), wax monoester and wax diester synthases. Also able to use 1-monoalkylglycerol (1-MAkG) as an acyl acceptor for the synthesis of monoalkyl-monoacylglycerol (MAMAG). This Mus musculus (Mouse) protein is Diacylglycerol O-acyltransferase 1.